The sequence spans 610 residues: Dapper homolog 3 (610 aa).

Phosphoserine is present on Ser-6. 3 disordered regions span residues 50-76 (PGMG…RRAA), 102-179 (LESG…SVGA), and 200-579 (TCSS…PAGP). The span at 56 to 69 (EAEDEEDAEEDEDA) shows a compositional bias: acidic residues. A coiled-coil region spans residues 63 to 87 (AEEDEDAAAARRAAAALEEQLEALP). A compositionally biased stretch (low complexity) spans 120–138 (DPSSTGGPDSPPSTFCGDS). Ser-165 and Ser-237 each carry phosphoserine. An Omega-N-methylarginine modification is found at Arg-255. Residues 317–331 (PPEPAPPAAASPPSS) show a composition bias toward pro residues. The span at 344–356 (PGAPAASRGLPGR) shows a compositional bias: low complexity. A phosphoserine mark is found at Ser-409 and Ser-456. Residues 475–485 (PRGPAPSPSAP) show a composition bias toward pro residues. The span at 524 to 545 (ESESSASEGESPAFSSASSDSD) shows a compositional bias: low complexity. A compositionally biased stretch (gly residues) spans 566-576 (GPGGAAGGGTP). Residues 607-610 (MTTV) carry the PDZ-binding motif.

Belongs to the dapper family. In terms of assembly, can form homodimers and heterodimers with DACT1 or DACT3. Interacts with CSNK1D, PKA catalytic subunit, PKC-type kinase, DVL1, DVL2, DVL3, VANGL1, VANGL2 and CTNND1. In terms of tissue distribution, expressed in brain and uterus.

Functionally, may be involved in regulation of intracellular signaling pathways during development. Specifically thought to play a role in canonical and/or non-canonical Wnt signaling pathways through interaction with DSH (Dishevelled) family proteins. In Mus musculus (Mouse), this protein is Dapper homolog 3 (Dact3).